Reading from the N-terminus, the 158-residue chain is Transcription elongation factor GreA (158 aa).

This sequence belongs to the GreA/GreB family.

Its function is as follows. Necessary for efficient RNA polymerase transcription elongation past template-encoded arresting sites. The arresting sites in DNA have the property of trapping a certain fraction of elongating RNA polymerases that pass through, resulting in locked ternary complexes. Cleavage of the nascent transcript by cleavage factors such as GreA or GreB allows the resumption of elongation from the new 3'terminus. GreA releases sequences of 2 to 3 nucleotides. The protein is Transcription elongation factor GreA of Bacillus licheniformis (strain ATCC 14580 / DSM 13 / JCM 2505 / CCUG 7422 / NBRC 12200 / NCIMB 9375 / NCTC 10341 / NRRL NRS-1264 / Gibson 46).